Reading from the N-terminus, the 103-residue chain is Small ribosomal subunit protein uS10 (103 aa).

Belongs to the universal ribosomal protein uS10 family. As to quaternary structure, part of the 30S ribosomal subunit.

Functionally, involved in the binding of tRNA to the ribosomes. This chain is Small ribosomal subunit protein uS10, found in Chlorobium limicola (strain DSM 245 / NBRC 103803 / 6330).